A 185-amino-acid chain; its full sequence is MINDIKKDAQERMTKSLEALGRNLAAIRTGRAHPSILDTVKVTAWGSEMPLNQVAAITVEDARTLKIVAHDKNLSAAIEKAILTSDLGLNPSSAGTTIRVPMPALTEETRKGYTKQASGVAEDAKVAVRNVRRDALADLKKLTKDKEISEDEERRAADEIQKLTDKFVAEVDAAFKAKEKDLMAV.

Belongs to the RRF family.

It localises to the cytoplasm. Its function is as follows. Responsible for the release of ribosomes from messenger RNA at the termination of protein biosynthesis. May increase the efficiency of translation by recycling ribosomes from one round of translation to another. In Pseudomonas putida (strain GB-1), this protein is Ribosome-recycling factor.